A 226-amino-acid chain; its full sequence is MNDILIRIARRIKKNIIWIIAVPIILGAAGYILPSQIADQKSYTAEDTLAVGSYDHPVYNSTEEIPLLLKSDSFLKEALPDEKDEDVAEIKEKLTINTESKSLLTLSYSDEDKDRTESVLNAISSTFLKNDQKLYAEREAVIRSSIDALEGESVSEDSKVDKERFLYELKNTQLNLKAASVTDSETVSETAGGGMSPKKKAVLGVMIGLTIAFMFVVIPEFFRESF.

2 helical membrane-spanning segments follow: residues 15–35 (NIIW…ILPS) and 202–222 (VLGV…PEFF).

The protein resides in the cell membrane. Its pathway is cell wall biogenesis; teichuronic acid biosynthesis. The sequence is that of Teichuronic acid biosynthesis protein TuaF (tuaF) from Bacillus subtilis (strain 168).